The primary structure comprises 899 residues: Translation initiation factor IF-2 (899 aa).

Disordered stretches follow at residues 65 to 84 (KTRS…SVQI) and 91 to 310 (TYVK…SFNK). Polar residues predominate over residues 68-82 (STLNVPSTGGKSKSV). Over residues 108–164 (QARREAEEQAQRAAEEQAKREAELREAAEKAKRAADEQAKREAAEKAKRDVAEKEKV) the composition is skewed to basic and acidic residues. The segment covering 165–174 (TNQQNENMTK) has biased composition (polar residues). Basic and acidic residues predominate over residues 177-236 (QAEKAKREAEAAELKRKAEEAARLKVEEEARRIAEEARRMAEENAGRWEAESAKPEESAD). Residues 262–276 (SRSRAGKVTKQKKGN) show a composition bias toward basic residues. Positions 277-290 (RQSESKADREEARA) are enriched in basic and acidic residues. In terms of domain architecture, tr-type G spans 398-567 (ARAPVVTIMG…LLQAEVLELK (170 aa)). Positions 407–414 (GHVDHGKT) are G1. 407-414 (GHVDHGKT) serves as a coordination point for GTP. A G2 region spans residues 432–436 (GITQH). Positions 453–456 (DTPG) are G3. GTP-binding positions include 453–457 (DTPGH) and 507–510 (NKID). Positions 507 to 510 (NKID) are G4. The interval 543-545 (SAK) is G5.

It belongs to the TRAFAC class translation factor GTPase superfamily. Classic translation factor GTPase family. IF-2 subfamily.

The protein localises to the cytoplasm. One of the essential components for the initiation of protein synthesis. Protects formylmethionyl-tRNA from spontaneous hydrolysis and promotes its binding to the 30S ribosomal subunits. Also involved in the hydrolysis of GTP during the formation of the 70S ribosomal complex. The polypeptide is Translation initiation factor IF-2 (Pectobacterium carotovorum subsp. carotovorum (strain PC1)).